A 110-amino-acid chain; its full sequence is Host transcription reprogramming factor 2 (110 aa).

Residues 1 to 18 form the signal peptide; sequence MHLKASSILALLVIGANA. The segment at 68–96 adopts a C2H2-type zinc-finger fold; that stretch reads IMCGYCGKRFWNKPDLEKHIKLKPSKGGH. The interval 88 to 110 is disordered; that stretch reads KLKPSKGGHKGQPYKEHSWNRPT. The span at 100-110 shows a compositional bias: basic and acidic residues; that stretch reads PYKEHSWNRPT.

Its subcellular location is the secreted. It is found in the host nucleus. Secreted effector that translocates into the nuclei of host cells to reprogram the expression of immunity-associated genes by binding to effector binding elements (EBEs) in rice. Binds the 5'-CCACCTCC-3' EBE of promoters from targeted rice genes and probably recruits a yet to be determined host repressor. Causes ambivalent immunity with increased susceptibility to the hemibiotrophic pathogens Magnaporthe oryzae and Xanthomonas oryzae pv. oryzae, but enhances resistance to Cochliobolus miyabeanus, a necrotrophic pathogen. The chain is Host transcription reprogramming factor 2 from Pyricularia oryzae (strain 70-15 / ATCC MYA-4617 / FGSC 8958) (Rice blast fungus).